Here is a 37-residue protein sequence, read N- to C-terminus: Hemextin A (37 aa).

As to quaternary structure, heterotetramer composed of two A and two B chains; non-covalently linked. Does not exist as a complex in the crude venom. In terms of processing, may contain several disulfide bonds. Expressed by the venom gland.

It is found in the secreted. Functionally, hemextin A (monomer): exhibits mild anticoagulant activity. It specifically inhibits the activation of FX (F10) by the TF-FVIIa complex (extrinsic tenase complex (ETC)) by non-competitively inhibiting the enzymatic activity of FVIIa. In terms of biological role, hemextin AB complex: specifically inhibits the activation of FX (F10) by the TF-FVIIa complex (extrinsic tenase complex (ETC)) (IC(50)= 100 nM, Ki=25 nM) by non-competitively inhibiting the enzymatic activity of FVIIa. This is Hemextin A from Hemachatus haemachatus (Rinkhals).